A 224-amino-acid chain; its full sequence is Processed variable antigen (224 aa).

A run of 17 repeats spans residues 1 to 6, 7 to 12, 13 to 18, 19 to 24, 25 to 30, 31 to 36, 37 to 42, 43 to 48, 49 to 54, 55 to 60, 61 to 66, 67 to 72, 73 to 78, 79 to 84, 85 to 90, 91 to 96, and 97 to 102. The 17 X 6 AA tandem repeats of E-T-G-E-S-K stretch occupies residues 1–102; it reads ETGESKETGE…GESKETGESK (102 aa). Over residues 1–137 the composition is skewed to basic and acidic residues; it reads ETGESKETGE…TEESKDREGN (137 aa). Residues 1–224 form a disordered region; sequence ETGESKETGE…KKADNKKKKK (224 aa). Residues 144–153 are compositionally biased toward low complexity; the sequence is ENSENSNVTS. Composition is skewed to basic and acidic residues over residues 156–173 and 185–217; these read EETK…EKLG and EDPK…EKKA.

The protein is Processed variable antigen of Plasmodium falciparum.